The primary structure comprises 206 residues: Probable thymidylate kinase (206 aa).

10–17 (GIDGSGKS) provides a ligand contact to ATP.

Belongs to the thymidylate kinase family.

It carries out the reaction dTMP + ATP = dTDP + ADP. The sequence is that of Probable thymidylate kinase from Methanosarcina mazei (strain ATCC BAA-159 / DSM 3647 / Goe1 / Go1 / JCM 11833 / OCM 88) (Methanosarcina frisia).